A 570-amino-acid polypeptide reads, in one-letter code: Hemagglutinin-neuraminidase (570 aa).

The Intravirion segment spans residues Met1–Arg26. Residues Ile27–Met48 form a helical membrane-spanning segment. Residues Glu49–Val570 lie on the Virion surface side of the membrane. The N-linked (GlcNAc...) asparagine; by host glycan is linked to Asn119. The interval Gly124 to Tyr152 is important for interaction with fusion/F protein. Intrachain disulfides connect Cys172–Cys195, Cys185–Cys246, and Cys237–Cys250. An involved in neuraminidase activity region spans residues Asn233 to Ser238. Residues Asn340 and Asn432 are each glycosylated (N-linked (GlcNAc...) asparagine; by host). Cystine bridges form between Cys343-Cys460 and Cys454-Cys464. N-linked (GlcNAc...) asparagine; by host glycosylation is found at Asn480, Asn507, and Asn537. Cys530 and Cys541 form a disulfide bridge.

This sequence belongs to the paramyxoviruses hemagglutinin-neuraminidase family. In terms of assembly, homotetramer; composed of disulfide-linked homodimers. Interacts with F protein trimer. Interacts with host CG-1B; this interaction inhibits viral adsorption and replication rather than internalization.

The protein localises to the virion membrane. It localises to the host cell membrane. The catalysed reaction is Hydrolysis of alpha-(2-&gt;3)-, alpha-(2-&gt;6)-, alpha-(2-&gt;8)- glycosidic linkages of terminal sialic acid residues in oligosaccharides, glycoproteins, glycolipids, colominic acid and synthetic substrates.. Its function is as follows. Mediates the viral entry into the host cell together with fusion/F protein. Attaches the virus to sialic acid-containing cell receptors and thereby initiates infection. Binding of HN protein to the receptor induces a conformational change that allows the F protein to trigger virion/cell membranes fusion. Neuraminidase activity ensures the efficient spread of the virus by dissociating the mature virions from the neuraminic acid containing glycoproteins. The polypeptide is Hemagglutinin-neuraminidase (HN) (Gallus gallus (Chicken)).